Reading from the N-terminus, the 398-residue chain is uncharacterized protein (398 aa).

This is an uncharacterized protein from Bacillus subtilis (strain 168).